The following is a 37-amino-acid chain: Large ribosomal subunit protein bL36c (37 aa).

Belongs to the bacterial ribosomal protein bL36 family.

The protein localises to the plastid. It is found in the chloroplast. In Lotus japonicus (Lotus corniculatus var. japonicus), this protein is Large ribosomal subunit protein bL36c.